The chain runs to 224 residues: Uridylate kinase (224 aa).

Residue 6–10 (KVTGK) coordinates ATP. Gly41 lines the UMP pocket. ATP contacts are provided by Gly42 and Arg46. UMP is bound by residues Asp63 and 111-117 (FQPGQST). Residues Thr137, Phe143, and Asp146 each coordinate ATP.

Belongs to the UMP kinase family. As to quaternary structure, homohexamer.

The protein resides in the cytoplasm. It catalyses the reaction UMP + ATP = UDP + ADP. It functions in the pathway pyrimidine metabolism; CTP biosynthesis via de novo pathway; UDP from UMP (UMPK route): step 1/1. With respect to regulation, inhibited by UTP. Functionally, catalyzes the reversible phosphorylation of UMP to UDP. The polypeptide is Uridylate kinase (Metallosphaera sedula (strain ATCC 51363 / DSM 5348 / JCM 9185 / NBRC 15509 / TH2)).